We begin with the raw amino-acid sequence, 197 residues long: Small ribosomal subunit protein uS10c (197 aa).

Residues 1–60 (MATSSLSTIVFSPLALSNSSSFPNKPQVSNLSLHSSLSNLRRTLSHSSPSSSSSSNVRVF) constitute a chloroplast transit peptide. The interval 67–91 (ESQETGPESYVEEGSETSALGIGAD) is disordered.

Belongs to the universal ribosomal protein uS10 family. Part of the 30S ribosomal subunit.

It localises to the plastid. Its subcellular location is the chloroplast. This Mesembryanthemum crystallinum (Common ice plant) protein is Small ribosomal subunit protein uS10c (RPS10).